An 87-amino-acid polypeptide reads, in one-letter code: Putative regulatory protein BH2513 (87 aa).

It belongs to the RemA family.

This is Putative regulatory protein BH2513 from Halalkalibacterium halodurans (strain ATCC BAA-125 / DSM 18197 / FERM 7344 / JCM 9153 / C-125) (Bacillus halodurans).